A 689-amino-acid chain; its full sequence is DNA ligase (689 aa).

NAD(+)-binding positions include 40 to 44 (DSEYD), 89 to 90 (SL), and glutamate 121. Lysine 123 (N6-AMP-lysine intermediate) is an active-site residue. NAD(+) is bound by residues arginine 144, glutamate 179, lysine 295, and lysine 319. Residues cysteine 413, cysteine 416, cysteine 431, and cysteine 437 each contribute to the Zn(2+) site. A BRCT domain is found at 610 to 689 (REQSGLTDKI…EEWLTLIKNV (80 aa)).

It belongs to the NAD-dependent DNA ligase family. LigA subfamily. It depends on Mg(2+) as a cofactor. The cofactor is Mn(2+).

The enzyme catalyses NAD(+) + (deoxyribonucleotide)n-3'-hydroxyl + 5'-phospho-(deoxyribonucleotide)m = (deoxyribonucleotide)n+m + AMP + beta-nicotinamide D-nucleotide.. DNA ligase that catalyzes the formation of phosphodiester linkages between 5'-phosphoryl and 3'-hydroxyl groups in double-stranded DNA using NAD as a coenzyme and as the energy source for the reaction. It is essential for DNA replication and repair of damaged DNA. The polypeptide is DNA ligase (Rickettsia conorii (strain ATCC VR-613 / Malish 7)).